A 396-amino-acid polypeptide reads, in one-letter code: Elongation factor Tu (396 aa).

Positions 11–205 (KPHVNIGTIG…TVDEYIPTPE (195 aa)) constitute a tr-type G domain. The segment at 20-27 (GHVDHGKT) is G1. 20 to 27 (GHVDHGKT) contributes to the GTP binding site. Thr-27 is a Mg(2+) binding site. Residues 61 to 65 (GITIN) are G2. The segment at 82–85 (DAPG) is G3. Residues 82 to 86 (DAPGH) and 137 to 140 (NKCD) each bind GTP. Residues 137–140 (NKCD) are G4. A G5 region spans residues 175 to 177 (SAL).

Belongs to the TRAFAC class translation factor GTPase superfamily. Classic translation factor GTPase family. EF-Tu/EF-1A subfamily. As to quaternary structure, monomer.

It is found in the cytoplasm. The enzyme catalyses GTP + H2O = GDP + phosphate + H(+). Functionally, GTP hydrolase that promotes the GTP-dependent binding of aminoacyl-tRNA to the A-site of ribosomes during protein biosynthesis. The sequence is that of Elongation factor Tu from Lactobacillus helveticus (strain DPC 4571).